A 294-amino-acid chain; its full sequence is MAKPRGRKGGRKPSLTPPKNKRAAQLRASQNAFRKRKLERLEELEKKEAQLTVTNDQIHILKKENELLHFMLRSLLTERNMPSDERNISKACCEEKPPTCNTLDGSVVLSSTYNSLEIQQCYVFFKQLLSVCVGKNCTVPSPLNSFDRSFYPIGCTNLSNDIPGYSFLNDAMSEIHTFGDFNGELDSTFLEFSGTEIKEPNNFITENTNAIETAAASMVIRQGFHPRQYYTVDAFGGDVLLSAMDIWSFMKVHPKVNTFDLEILGTELKKSATCSNFDILISLKHFIKVFSSKL.

Over residues 1 to 11 (MAKPRGRKGGR) the composition is skewed to basic residues. A disordered region spans residues 1–29 (MAKPRGRKGGRKPSLTPPKNKRAAQLRAS). A basic motif region spans residues 22–45 (RAAQLRASQNAFRKRKLERLEELE). Residues 22–72 (RAAQLRASQNAFRKRKLERLEELEKKEAQLTVTNDQIHILKKENELLHFML) enclose the bZIP domain. The segment at 44–72 (LEKKEAQLTVTNDQIHILKKENELLHFML) is leucine-zipper. Arsenite is bound by residues Cys-132, Cys-137, and Cys-274.

This sequence belongs to the bZIP family. YAP subfamily. As to quaternary structure, homodimer. Phosphorylation by HOG1 promotes nuclear localization in the presence of arsenic.

The protein localises to the cytoplasm. The protein resides in the nucleus. With respect to regulation, transcriptional activity is controlled by regulated degradation by the ubiquitin-proteasome pathway in absence of arsenic. Arsenic-exposure results in stabilization and increased transcriptional activity. In terms of biological role, transcription activator required for resistance to arsenic compounds and for a regulated expression of ACR2, ACR3 and YCF1. This chain is Arsenical-resistance protein ARR1, found in Saccharomyces cerevisiae (strain ATCC 204508 / S288c) (Baker's yeast).